A 215-amino-acid chain; its full sequence is Ribonuclease T (215 aa).

The 175-residue stretch at 20–194 folds into the Exonuclease domain; the sequence is VVIDVETAGF…YDTERTAVLF (175 aa). Mg(2+) contacts are provided by Asp-23, Glu-25, His-181, and Asp-186. His-181 acts as the Proton donor/acceptor in catalysis.

It belongs to the RNase T family. As to quaternary structure, homodimer. Mg(2+) is required as a cofactor.

Trims short 3' overhangs of a variety of RNA species, leaving a one or two nucleotide 3' overhang. Responsible for the end-turnover of tRNA: specifically removes the terminal AMP residue from uncharged tRNA (tRNA-C-C-A). Also appears to be involved in tRNA biosynthesis. The chain is Ribonuclease T from Shigella boydii serotype 4 (strain Sb227).